Reading from the N-terminus, the 400-residue chain is Small ribosomal subunit protein bS1 (400 aa).

S1 motif domains lie at 17-87 (GDVV…VTYL), 107-173 (EEVV…LSRR), 194-262 (GDVV…LSLK), and 279-348 (GDVV…LSIK). Positions 351 to 366 (EERPAQEEGQKEEKRA) are enriched in basic and acidic residues. The interval 351-400 (EERPAQEEGQKEEKRAARPRRPRRQEKRDFELPETQTGFSMADLFGDIEL) is disordered.

The protein belongs to the bacterial ribosomal protein bS1 family. In terms of processing, phosphorylated.

In terms of biological role, binds mRNA; thus facilitating recognition of the initiation point. It is needed to translate mRNA with a short Shine-Dalgarno (SD) purine-rich sequence. The protein is Small ribosomal subunit protein bS1 (rpsA) of Streptococcus pneumoniae (strain ATCC BAA-255 / R6).